The following is a 660-amino-acid chain: Protein translocase subunit SecA 2 (660 aa).

ATP is bound by residues Q113, 131–135 (GEGKT), and D539.

It belongs to the SecA family. In terms of assembly, monomer and homodimer. Part of the essential Sec protein translocation apparatus which comprises SecA, SecYEG and auxiliary proteins SecDF-YajC and YidC.

The protein localises to the cell inner membrane. The protein resides in the cytoplasm. It catalyses the reaction ATP + H2O + cellular proteinSide 1 = ADP + phosphate + cellular proteinSide 2.. Functionally, part of the Sec protein translocase complex. Interacts with the SecYEG preprotein conducting channel. Has a central role in coupling the hydrolysis of ATP to the transfer of proteins into and across the cell membrane, serving both as a receptor for the preprotein-SecB complex and as an ATP-driven molecular motor driving the stepwise translocation of polypeptide chains across the membrane. The polypeptide is Protein translocase subunit SecA 2 (Bordetella avium (strain 197N)).